The sequence spans 110 residues: Cyclin-dependent protein kinase inhibitor SMR8 (110 aa).

As to quaternary structure, interacts with CDKA-1 and D-type cyclins. Expressed in the root vascular tissue.

Functionally, probable cyclin-dependent protein kinase (CDK) inhibitor that functions as a repressor of mitosis in the endoreduplication cell cycle. The polypeptide is Cyclin-dependent protein kinase inhibitor SMR8 (Arabidopsis thaliana (Mouse-ear cress)).